The primary structure comprises 368 residues: 4-hydroxy-3-methylbut-2-en-1-yl diphosphate synthase (flavodoxin) (368 aa).

Residues cysteine 271, cysteine 274, cysteine 306, and glutamate 313 each contribute to the [4Fe-4S] cluster site.

Belongs to the IspG family. [4Fe-4S] cluster serves as cofactor.

It catalyses the reaction (2E)-4-hydroxy-3-methylbut-2-enyl diphosphate + oxidized [flavodoxin] + H2O + 2 H(+) = 2-C-methyl-D-erythritol 2,4-cyclic diphosphate + reduced [flavodoxin]. It participates in isoprenoid biosynthesis; isopentenyl diphosphate biosynthesis via DXP pathway; isopentenyl diphosphate from 1-deoxy-D-xylulose 5-phosphate: step 5/6. Converts 2C-methyl-D-erythritol 2,4-cyclodiphosphate (ME-2,4cPP) into 1-hydroxy-2-methyl-2-(E)-butenyl 4-diphosphate. This Haemophilus influenzae (strain ATCC 51907 / DSM 11121 / KW20 / Rd) protein is 4-hydroxy-3-methylbut-2-en-1-yl diphosphate synthase (flavodoxin).